A 195-amino-acid chain; its full sequence is HTH-type transcriptional regulator TtmR (195 aa).

In terms of domain architecture, HTH marR-type spans 47–177; that stretch reads DSQLCFAVYA…LLDNLASMRD (131 aa). Positions 93–116 form a DNA-binding region, H-T-H motif; it reads VKEIGSRLFLDSGTLTPLLKRLEA.

It localises to the cytoplasm. Functionally, formaldehyde-responsive transcription factor that modulates resistance to stress induced by formaldehyde. Impacts the expression of a number of genes encoding transcription factors and/or involved in stress response, including efgA, and which probably collectively trigger a formaldehyde-specific physiological response. Required for optimal transition to methylotrophy. Not involved in a general stress response. The chain is HTH-type transcriptional regulator TtmR from Methylorubrum extorquens (strain PA1) (Methylobacterium extorquens).